The chain runs to 249 residues: Probable transcriptional regulatory protein Wbm0670 (249 aa).

Belongs to the TACO1 family.

The protein resides in the cytoplasm. This is Probable transcriptional regulatory protein Wbm0670 from Wolbachia sp. subsp. Brugia malayi (strain TRS).